The primary structure comprises 456 residues: Glycosyl hydrolase family 109 protein 2 (456 aa).

A signal peptide (tat-type signal) is located at residues 1–33 (MSGFDRRSFLKASMVTAAATALAACASSERATG). Residues 63–64 (ER), D85, 134–137 (WAWH), 154–155 (EV), and N183 contribute to the NAD(+) site. Substrate is bound by residues Y212, R231, 243-246 (YPTH), and Y325. Y243 provides a ligand contact to NAD(+).

It belongs to the Gfo/Idh/MocA family. Glycosyl hydrolase 109 subfamily. NAD(+) is required as a cofactor. In terms of processing, predicted to be exported by the Tat system. The position of the signal peptide cleavage has not been experimentally proven.

In terms of biological role, glycosidase. This is Glycosyl hydrolase family 109 protein 2 from Shewanella sp. (strain ANA-3).